A 233-amino-acid polypeptide reads, in one-letter code: Octanoyltransferase (233 aa).

Residues 38–218 enclose the BPL/LPL catalytic domain; sequence AGGPDTLLLL…LVCDALDGVL (181 aa). A compositionally biased stretch (basic and acidic residues) spans 57 to 66; the sequence is RRTEPHERPL. The segment at 57-77 is disordered; the sequence is RRTEPHERPLDGTPVVDTDRG. Substrate-binding positions include 76–83, 148–150, and 161–163; these read RGGKITWH, AIG, and GFA. Cys-179 functions as the Acyl-thioester intermediate in the catalytic mechanism.

It belongs to the LipB family.

It localises to the cytoplasm. It carries out the reaction octanoyl-[ACP] + L-lysyl-[protein] = N(6)-octanoyl-L-lysyl-[protein] + holo-[ACP] + H(+). Its pathway is protein modification; protein lipoylation via endogenous pathway; protein N(6)-(lipoyl)lysine from octanoyl-[acyl-carrier-protein]: step 1/2. In terms of biological role, catalyzes the transfer of endogenously produced octanoic acid from octanoyl-acyl-carrier-protein onto the lipoyl domains of lipoate-dependent enzymes. Lipoyl-ACP can also act as a substrate although octanoyl-ACP is likely to be the physiological substrate. The chain is Octanoyltransferase from Mycobacterium avium (strain 104).